A 510-amino-acid polypeptide reads, in one-letter code: Histidine ammonia-lyase (510 aa).

Residues 143–145 constitute a cross-link (5-imidazolinone (Ala-Gly)); the sequence is ASG. 2,3-didehydroalanine (Ser) is present on Ser144.

The protein belongs to the PAL/histidase family. Post-translationally, contains an active site 4-methylidene-imidazol-5-one (MIO), which is formed autocatalytically by cyclization and dehydration of residues Ala-Ser-Gly.

It is found in the cytoplasm. The enzyme catalyses L-histidine = trans-urocanate + NH4(+). The protein operates within amino-acid degradation; L-histidine degradation into L-glutamate; N-formimidoyl-L-glutamate from L-histidine: step 1/3. The sequence is that of Histidine ammonia-lyase from Shewanella sediminis (strain HAW-EB3).